The chain runs to 337 residues: G-protein coupled receptor 26 (337 aa).

The Extracellular segment spans residues 1 to 10; that stretch reads MNSWDAGLAG. The helical transmembrane segment at 11-31 threads the bilayer; that stretch reads LLVGTIGVSLLSNGLVLLCLL. Residues 32 to 47 are Cytoplasmic-facing; it reads HSADIRRQAPALFTLN. The helical transmembrane segment at 48 to 68 threads the bilayer; sequence LTCGNLLCTVVNMPLTLAGVV. Residues 69–81 lie on the Extracellular side of the membrane; sequence AQRQPAGDRLCRL. Cysteine 79 and cysteine 156 are disulfide-bonded. Residues 82–102 form a helical membrane-spanning segment; sequence AAFLDTFLAANSMLSMAALSI. Residues 103–123 lie on the Cytoplasmic side of the membrane; the sequence is DRWVAVVFPLSYRAKMRLRDA. A helical transmembrane segment spans residues 124 to 144; sequence AFMVAYTWLHALTFPATALAL. Topologically, residues 145 to 168 are extracellular; sequence SWLGFHQLYASCTLCSRRPDERLR. The helical transmembrane segment at 169–189 threads the bilayer; sequence FAVFTSAFHALSFLLSFIVLC. Residues 190 to 245 lie on the Cytoplasmic side of the membrane; that stretch reads FTYLKVLKVARFHCKRIDVITMQTLVLLVDIHPSVRERCLEEQKRRRQRATKKIST. Residues 246–266 traverse the membrane as a helical segment; it reads FIGTFLVCFAPYVITRLVELF. Residues 267–276 are Extracellular-facing; sequence STAPIGSHWG. Residues 277-297 form a helical membrane-spanning segment; it reads VLSKCLAYSKAASDPFVYSLL. Residues 298–337 are Cytoplasmic-facing; that stretch reads RHQYRRSCKELLNRIFNRRSLHSVGLTGDSHSQNILPVSE.

It belongs to the G-protein coupled receptor 1 family. As to expression, exclusively expressed in the brain. Prominent expression is detected throughout the entire neocortex at all rostrocaudal and dorsoventral levels. Strong expression is detected in olfactory and auditory sensory areas.

The protein localises to the cell membrane. Orphan receptor. Displays a significant level of constitutive activity. Its effect is mediated by G(s)-alpha protein that stimulate adenylate cyclase, resulting in an elevation of intracellular cAMP. In Mus musculus (Mouse), this protein is G-protein coupled receptor 26 (Gpr26).